A 504-amino-acid chain; its full sequence is DnaJ homolog subfamily C member 3 (504 aa).

Residues 1–31 form the signal peptide; sequence MVAPGSVRSRLGAVFPFLLVLVDLQYEGAEC. 9 TPR repeats span residues 37-70, 72-104, 105-138, 154-187, 188-221, 222-255, 268-301, 306-339, and 340-373; these read VEKH…DPDN, IAYY…KMDF, TAAR…NPSE, MQRL…CVWD, AELR…KNDN, TEAF…DQDH, LNKL…EPSV, VRSK…EPDN, and VNAL…NEND. A disulfide bridge connects residues Cys248 and Cys258. Phosphoserine is present on Ser274. Cys313 and Cys329 are joined by a disulfide. Residues 375–393 are flexible linker; it reads QIREGLEKAQRLLKQSQKR. The J domain maps to 394–462; sequence DYYKILGVKR…EMRRKFDDGE (69 aa). The interval 451 to 481 is disordered; it reads DPEMRRKFDDGEDPLDAETQQGGGSNPFHRS. A Phosphoserine modification is found at Ser475.

Interacts with EIF2AK2 and EIF2AK3. Forms a trimeric complex with DNAJB1 and HSPA8. Interacts with THAP12.

It is found in the endoplasmic reticulum. Involved in the unfolded protein response (UPR) during ER stress. Co-chaperone of HSPA8/HSC70, it stimulates its ATPase activity. May inhibit both the autophosphorylation of EIF2AK2/PKR and the ability of EIF2AK2 to catalyze phosphorylation of the EIF2A. May inhibit EIF2AK3/PERK activity. In Rattus norvegicus (Rat), this protein is DnaJ homolog subfamily C member 3 (Dnajc3).